A 209-amino-acid chain; its full sequence is Large ribosomal subunit protein uL4 (209 aa).

A disordered region spans residues 46–71 (GTSSTKTRSEVRGSSKKPWKQKGTGR). Residues 59-71 (SSKKPWKQKGTGR) show a composition bias toward basic residues.

This sequence belongs to the universal ribosomal protein uL4 family. Part of the 50S ribosomal subunit.

Functionally, one of the primary rRNA binding proteins, this protein initially binds near the 5'-end of the 23S rRNA. It is important during the early stages of 50S assembly. It makes multiple contacts with different domains of the 23S rRNA in the assembled 50S subunit and ribosome. In terms of biological role, forms part of the polypeptide exit tunnel. In Borreliella afzelii (strain PKo) (Borrelia afzelii), this protein is Large ribosomal subunit protein uL4.